The chain runs to 152 residues: Deoxyuridine 5'-triphosphate nucleotidohydrolase (152 aa).

Residues 72–74, N85, and 89–91 contribute to the substrate site; these read RSG and TID.

It belongs to the dUTPase family. Mg(2+) is required as a cofactor.

The catalysed reaction is dUTP + H2O = dUMP + diphosphate + H(+). It functions in the pathway pyrimidine metabolism; dUMP biosynthesis; dUMP from dCTP (dUTP route): step 2/2. Functionally, this enzyme is involved in nucleotide metabolism: it produces dUMP, the immediate precursor of thymidine nucleotides and it decreases the intracellular concentration of dUTP so that uracil cannot be incorporated into DNA. The sequence is that of Deoxyuridine 5'-triphosphate nucleotidohydrolase from Rhodopseudomonas palustris (strain BisB5).